Reading from the N-terminus, the 483-residue chain is Trimethylamine methyltransferase MttB (483 aa).

A non-standard amino acid (pyrrolysine) is located at residue pyrrolysine 334.

Belongs to the trimethylamine methyltransferase family. As to quaternary structure, can form a complex with MttC.

The enzyme catalyses Co(I)-[trimethylamine-specific corrinoid protein] + trimethylamine + H(+) = methyl-Co(III)-[trimethylamine-specific corrinoid protein] + dimethylamine. Its pathway is one-carbon metabolism; methanogenesis from trimethylamine. Catalyzes the transfer of a methyl group from trimethylamine to the corrinoid cofactor of MttC. In Methanosarcina thermophila, this protein is Trimethylamine methyltransferase MttB (mttB).